A 3390-amino-acid polypeptide reads, in one-letter code: Genome polyprotein (3390 aa).

The interaction with host EXOC1 stretch occupies residues 1–15 (MNNQRKKTGKPSINM). The Cytoplasmic segment spans residues 1–100 (MNNQRKKTGK…MLSIINKRKK (100 aa)). The hydrophobic; homodimerization of capsid protein C stretch occupies residues 37–72 (LLNGQGPMKLVMAFIAFLRFLAIPPTAGVLARWGTF). Positions 101-114 (TSLCLMMIMPAALA) are cleaved as a propeptide — ER anchor for the capsid protein C, removed in mature form by serine protease NS3. A helical membrane pass occupies residues 101 to 120 (TSLCLMMIMPAALAFHLTSR). The Extracellular portion of the chain corresponds to 121-243 (DGEPRMIVGK…VEKVETWALR (123 aa)). An N-linked (GlcNAc...) asparagine; by host glycan is attached at asparagine 183. Residues 244 to 264 (HPGFTILALFLAHYIGTSLTQ) form a helical membrane-spanning segment. A topological domain (cytoplasmic) is located at residue lysine 265. A helical transmembrane segment spans residues 266–280 (VVIFILLMLVTPSMT). Residues 281–723 (MRCVGVGNRD…VHQIFGSAYT (443 aa)) lie on the Extracellular side of the membrane. Cystine bridges form between cysteine 283-cysteine 310, cysteine 340-cysteine 401, cysteine 354-cysteine 385, and cysteine 372-cysteine 396. N-linked (GlcNAc...) asparagine; by host glycosylation occurs at asparagine 347. Residues 378–391 (DRGWGNGCGLFGKG) are fusion peptide. A glycan (N-linked (GlcNAc...) asparagine; by host) is linked at asparagine 433. 2 disulfides stabilise this stretch: cysteine 463-cysteine 563 and cysteine 580-cysteine 611. A helical transmembrane segment spans residues 724–744 (ALFSGVSWVMKIGIGVLLTWI). Residues 745–750 (GLNSKN) are Cytoplasmic-facing. A helical membrane pass occupies residues 751-771 (TSMSFSCIAIGIITLYLGAVV). At 772–1193 (QADMGCVINW…MIGSNASDRM (422 aa)) the chain is on the extracellular side. 6 disulfides stabilise this stretch: cysteine 777/cysteine 788, cysteine 828/cysteine 916, cysteine 952/cysteine 996, cysteine 1053/cysteine 1102, cysteine 1064/cysteine 1086, and cysteine 1085/cysteine 1089. N-linked (GlcNAc...) asparagine; by host glycosylation is found at asparagine 903 and asparagine 980. N-linked (GlcNAc...) asparagine; by host glycans are attached at residues asparagine 1132 and asparagine 1188. Residues 1194-1218 (GMGVTYLALIATFKIQPFLALGFFL) traverse the membrane as a helical segment. The Cytoplasmic portion of the chain corresponds to 1219–1224 (RKLTSR). A helical membrane pass occupies residues 1225 to 1243 (ENLLLGVGLAMATTLQLPE). Residues 1244-1267 (DIEQMANGIALGLMALKLITQFET) are Lumenal-facing. A helical transmembrane segment spans residues 1268–1288 (YQLWTALISLTCSNTMFTLTV). Alanine 1289 is a topological domain (cytoplasmic). The helical transmembrane segment at 1290–1308 (WRTATLILAGVSLLPVCQS) threads the bilayer. Over 1309-1315 (SSMRKTD) the chain is Lumenal. A helical transmembrane segment spans residues 1316–1336 (WLPMAVAAMGVPPLPLFIFSL). The Cytoplasmic portion of the chain corresponds to 1337–1344 (KDTLKRRS). A helical membrane pass occupies residues 1345-1365 (WPLNEGVMAVGLVSILASSLL). The Lumenal segment spans residues 1366-1368 (RND). Residues 1369–1389 (VPMAGPLVAGGLLIACYVITG) traverse the membrane as a helical segment. Residues 1390-1443 (TSADLTVEKAADITWEEEAEQTGVSHNLMITVDDDGTMRIKDDETENILTVLLK) are Cytoplasmic-facing. The interacts with and activates NS3 protease stretch occupies residues 1396–1435 (VEKAADITWEEEAEQTGVSHNLMITVDDDGTMRIKDDETE). The segment at residues 1444 to 1464 (TALLIVSGVFPYSIPATLLVW) is an intramembrane region (helical). Topologically, residues 1465–2146 (HTWQKQTQRS…VEELPETMET (682 aa)) are cytoplasmic. Residues 1474–1651 (SGVLWDVPSP…NAEPDGPTPE (178 aa)) form the Peptidase S7 domain. Active-site charge relay system; for serine protease NS3 activity residues include histidine 1524, aspartate 1548, and serine 1608. Residues 1654–1810 (EEMFKKRNLT…QSNAPIQDEE (157 aa)) form the Helicase ATP-binding domain. Positions 1658-1661 (KKRN) are important for RNA-binding. An ATP-binding site is contributed by 1667–1674 (LHPGSGKT). The DEAH box signature appears at 1758–1761 (DEAH). The 167-residue stretch at 1820 to 1986 (SGNEWITDFA…GIIPALFEPE (167 aa)) folds into the Helicase C-terminal domain. The residue at position 1862 (lysine 1862) is an N6-acetyllysine; by host. A helical transmembrane segment spans residues 2147-2167 (LLLLGLMILLTGGAMLFLISG). Residues 2168–2169 (KG) lie on the Lumenal side of the membrane. The segment at residues 2170–2190 (IGKTSIGLICVIASSGMLWMA) is an intramembrane region (helical). Residue glutamate 2191 is a topological domain, lumenal. A helical membrane pass occupies residues 2192–2212 (IPLQWIASAIVLEFFMMVLLI). Residues 2213-2227 (PEPEKQRTPQDNQLA) are Cytoplasmic-facing. Residues 2228 to 2248 (YVVIGILTLAAIIAANEMGLL) traverse the membrane as a helical segment. At 2249–2273 (ETTKRDLGMSKEPGVVSPTSYLDVD) the chain is on the lumenal side. An intramembrane region (helical) is located at residues 2274-2294 (LHPASAWTLYAVATTVITPML). At 2295 to 2305 (RHTIENSTANV) the chain is on the lumenal side. N-linked (GlcNAc...) asparagine; by host glycans are attached at residues asparagine 2300 and asparagine 2304. Positions 2306 to 2326 (SLAAIANQAVVLMGLDKGWPI) form an intramembrane region, helical. The Lumenal portion of the chain corresponds to 2327–2346 (SKMDLGVPLLALGCYSQVNP). Residues 2347 to 2367 (LTLTAAVLLLITHYAIIGPGL) traverse the membrane as a helical segment. Residues 2368 to 2412 (QAKATREAQKRTAAGIMKNPTVDGIMTIDLDPVIYDSKFEKQLGQ) are Cytoplasmic-facing. Residues 2413-2433 (VMLLVLCAVQLLLMRTSWALC) traverse the membrane as a helical segment. Topologically, residues 2434 to 2458 (EALTLATGPITTLWEGSPGKFWNTT) are lumenal. N-linked (GlcNAc...) asparagine; by host glycosylation occurs at asparagine 2456. The chain crosses the membrane as a helical span at residues 2459–2479 (IAVSMANIFRGSYLAGAGLAF). At 2480–3390 (SIMKSVGTGK…KEEESEGAIW (911 aa)) the chain is on the cytoplasmic side. The mRNA cap 0-1 NS5-type MT domain maps to 2492-2753 (TGSQGETLGE…DVDLGAGTRH (262 aa)). Residue serine 2546 participates in S-adenosyl-L-methionine binding. Serine 2546 is subject to Phosphoserine. Catalysis depends on lysine 2551, which acts as the For 2'-O-MTase activity. An SUMO-interacting motif motif is present at residues 2567–2570 (VIDL). S-adenosyl-L-methionine contacts are provided by glycine 2576, tryptophan 2577, threonine 2594, lysine 2595, aspartate 2621, and valine 2622. The active-site For 2'-O-MTase activity is aspartate 2636. Isoleucine 2637 contacts S-adenosyl-L-methionine. Residues lysine 2670 and glutamate 2706 each act as for 2'-O-MTase activity in the active site. Tyrosine 2708 contacts S-adenosyl-L-methionine. Glutamate 2927, histidine 2931, cysteine 2936, and cysteine 2939 together coordinate Zn(2+). A RdRp catalytic domain is found at 3018–3168 (AMYADDTAGW…PIDDRFANAL (151 aa)). Zn(2+)-binding residues include histidine 3202, cysteine 3218, and cysteine 3337.

The protein in the N-terminal section; belongs to the class I-like SAM-binding methyltransferase superfamily. mRNA cap 0-1 NS5-type methyltransferase family. In terms of assembly, homodimer. Interacts (via N-terminus) with host EXOC1 (via C-terminus); this interaction results in EXOC1 degradation through the proteasome degradation pathway. Forms heterodimers with envelope protein E in the endoplasmic reticulum and Golgi. As to quaternary structure, homodimer; in the endoplasmic reticulum and Golgi. Interacts with protein prM. Interacts with non-structural protein 1. In terms of assembly, homodimer; Homohexamer when secreted. Interacts with envelope protein E. Interacts (via N-terminus) with serine protease NS3. As to quaternary structure, forms a heterodimer with serine protease NS3. May form homooligomers. In terms of assembly, forms a heterodimer with NS2B. Interacts with NS4B. Interacts with unphosphorylated RNA-directed RNA polymerase NS5; this interaction stimulates RNA-directed RNA polymerase NS5 guanylyltransferase activity. Interacts with host MAVS; this interaction inhibits the synthesis of IFN-beta. Interacts with host AUP1; the interaction occurs in the presence of Dengue virus NS4B and induces lipophagy which facilitates production of virus progeny particles. As to quaternary structure, interacts with serine protease NS3. In terms of assembly, homodimer. Interacts with host STAT2; this interaction inhibits the phosphorylation of the latter, and, when all viral proteins are present (polyprotein), targets STAT2 for degradation. Interacts with serine protease NS3. Post-translationally, specific enzymatic cleavages in vivo yield mature proteins. Cleavages in the lumen of endoplasmic reticulum are performed by host signal peptidase, whereas cleavages in the cytoplasmic side are performed by serine protease NS3. Signal cleavage at the 2K-4B site requires a prior NS3 protease-mediated cleavage at the 4A-2K site. Cleaved in post-Golgi vesicles by a host furin, releasing the mature small envelope protein M, and peptide pr. This cleavage is incomplete as up to 30% of viral particles still carry uncleaved prM. In terms of processing, N-glycosylated. Post-translationally, N-glycosylated. The excreted form is glycosylated and this is required for efficient secretion of the protein from infected cells. Acetylated by host KAT5. Acetylation modulates NS3 RNA-binding and unwinding activities and plays an important positive role for viral replication. In terms of processing, sumoylation of RNA-directed RNA polymerase NS5 increases NS5 protein stability allowing proper viral RNA replication. Post-translationally, phosphorylated on serines residues. This phosphorylation may trigger NS5 nuclear localization.

The protein localises to the virion. It localises to the host nucleus. The protein resides in the host cytoplasm. It is found in the host perinuclear region. Its subcellular location is the secreted. The protein localises to the virion membrane. It localises to the host endoplasmic reticulum membrane. The protein resides in the host mitochondrion. It catalyses the reaction Selective hydrolysis of -Xaa-Xaa-|-Yaa- bonds in which each of the Xaa can be either Arg or Lys and Yaa can be either Ser or Ala.. It carries out the reaction RNA(n) + a ribonucleoside 5'-triphosphate = RNA(n+1) + diphosphate. The catalysed reaction is a ribonucleoside 5'-triphosphate + H2O = a ribonucleoside 5'-diphosphate + phosphate + H(+). The enzyme catalyses ATP + H2O = ADP + phosphate + H(+). It catalyses the reaction a 5'-end (5'-triphosphoguanosine)-ribonucleoside in mRNA + S-adenosyl-L-methionine = a 5'-end (N(7)-methyl 5'-triphosphoguanosine)-ribonucleoside in mRNA + S-adenosyl-L-homocysteine. It carries out the reaction a 5'-end (N(7)-methyl 5'-triphosphoguanosine)-ribonucleoside in mRNA + S-adenosyl-L-methionine = a 5'-end (N(7)-methyl 5'-triphosphoguanosine)-(2'-O-methyl-ribonucleoside) in mRNA + S-adenosyl-L-homocysteine + H(+). In terms of biological role, plays a role in virus budding by binding to the cell membrane and gathering the viral RNA into a nucleocapsid that forms the core of a mature virus particle. During virus entry, may induce genome penetration into the host cytoplasm after hemifusion induced by the surface proteins. Can migrate to the cell nucleus where it modulates host functions. Overcomes the anti-viral effects of host EXOC1 by sequestering and degrading the latter through the proteasome degradation pathway. Inhibits RNA silencing by interfering with host Dicer. Its function is as follows. Prevents premature fusion activity of envelope proteins in trans-Golgi by binding to envelope protein E at pH6.0. After virion release in extracellular space, gets dissociated from E dimers. Functionally, acts as a chaperone for envelope protein E during intracellular virion assembly by masking and inactivating envelope protein E fusion peptide. prM is the only viral peptide matured by host furin in the trans-Golgi network probably to avoid catastrophic activation of the viral fusion activity in acidic Golgi compartment prior to virion release. prM-E cleavage is inefficient, and many virions are only partially matured. These uncleaved prM would play a role in immune evasion. In terms of biological role, may play a role in virus budding. Exerts cytotoxic effects by activating a mitochondrial apoptotic pathway through M ectodomain. May display a viroporin activity. Binds to host cell surface receptor and mediates fusion between viral and cellular membranes. Envelope protein is synthesized in the endoplasmic reticulum in the form of heterodimer with protein prM. They play a role in virion budding in the ER, and the newly formed immature particle is covered with 60 spikes composed of heterodimer between precursor prM and envelope protein E. The virion is transported to the Golgi apparatus where the low pH causes dissociation of PrM-E heterodimers and formation of E homodimers. prM-E cleavage is inefficient, and many virions are only partially matured. These uncleaved prM would play a role in immune evasion. Its function is as follows. Involved in immune evasion, pathogenesis and viral replication. Once cleaved off the polyprotein, is targeted to three destinations: the viral replication cycle, the plasma membrane and the extracellular compartment. Essential for viral replication. Required for formation of the replication complex and recruitment of other non-structural proteins to the ER-derived membrane structures. Excreted as a hexameric lipoparticle that plays a role against host immune response. Antagonizing the complement function. Binds to the host macrophages and dendritic cells. Inhibits signal transduction originating from Toll-like receptor 3 (TLR3). Functionally, disrupts the host endothelial glycocalyx layer of host pulmonary microvascular endothelial cells, inducing degradation of sialic acid and shedding of heparan sulfate proteoglycans. NS1 induces expression of sialidases, heparanase, and activates cathepsin L, which activates heparanase via enzymatic cleavage. These effects are probably linked to the endothelial hyperpermeability observed in severe dengue disease. In terms of biological role, component of the viral RNA replication complex that functions in virion assembly and antagonizes the host immune response. Required cofactor for the serine protease function of NS3. May have membrane-destabilizing activity and form viroporins. Its function is as follows. Displays three enzymatic activities: serine protease, NTPase and RNA helicase. NS3 serine protease, in association with NS2B, performs its autocleavage and cleaves the polyprotein at dibasic sites in the cytoplasm: C-prM, NS2A-NS2B, NS2B-NS3, NS3-NS4A, NS4A-2K and NS4B-NS5. NS3 RNA helicase binds RNA and unwinds dsRNA in the 3' to 5' direction. Functionally, regulates the ATPase activity of the NS3 helicase activity. NS4A allows NS3 helicase to conserve energy during unwinding. Plays a role in the inhibition of the host innate immune response. Interacts with host MAVS and thereby prevents the interaction between RIGI and MAVS. In turn, IFN-beta production is impaired. Interacts with host AUP1 which mediates induction of lipophagy in host cells and facilitates production of virus progeny particles. In terms of biological role, functions as a signal peptide for NS4B and is required for the interferon antagonism activity of the latter. Induces the formation of ER-derived membrane vesicles where the viral replication takes place. Inhibits interferon (IFN)-induced host STAT1 phosphorylation and nuclear translocation, thereby preventing the establishment of cellular antiviral state by blocking the IFN-alpha/beta pathway. Its function is as follows. Replicates the viral (+) and (-) RNA genome, and performs the capping of genomes in the cytoplasm. NS5 methylates viral RNA cap at guanine N-7 and ribose 2'-O positions. Besides its role in RNA genome replication, also prevents the establishment of cellular antiviral state by blocking the interferon-alpha/beta (IFN-alpha/beta) signaling pathway. Inhibits host TYK2 and STAT2 phosphorylation, thereby preventing activation of JAK-STAT signaling pathway. This Dengue virus type 3 (strain Martinique/1243/1999) (DENV-3) protein is Genome polyprotein (pol).